We begin with the raw amino-acid sequence, 444 residues long: Homocysteine/cysteine synthase (444 aa).

An N6-(pyridoxal phosphate)lysine modification is found at Lys208.

This sequence belongs to the trans-sulfuration enzymes family. As to quaternary structure, homotetramer. The cofactor is pyridoxal 5'-phosphate.

The protein resides in the cytoplasm. The catalysed reaction is O-acetyl-L-homoserine + methanethiol = L-methionine + acetate + H(+). The enzyme catalyses O-acetyl-L-homoserine + hydrogen sulfide = L-homocysteine + acetate. It catalyses the reaction O-acetyl-L-serine + hydrogen sulfide = L-cysteine + acetate. It functions in the pathway amino-acid biosynthesis; L-methionine biosynthesis via de novo pathway; L-homocysteine from O-acetyl-L-homoserine. Its pathway is amino-acid biosynthesis; L-cysteine biosynthesis; L-cysteine from L-serine: step 2/2. In terms of biological role, catalyzes the conversion of O-acetyl-L-homoserine (OAH) into homocysteine in the methionine biosynthesis pathway. Also catalyzes the conversion of O-acetylserine (OAS) into cysteine, the last step in the cysteine biosynthesis pathway. The sequence is that of Homocysteine/cysteine synthase (MET17) from Kluyveromyces lactis (strain ATCC 8585 / CBS 2359 / DSM 70799 / NBRC 1267 / NRRL Y-1140 / WM37) (Yeast).